The following is a 440-amino-acid chain: Ribosomal protein uS12 methylthiotransferase RimO (440 aa).

The 111-residue stretch at 8-118 (PTVGFVSLGC…VMGIVHTHLP (111 aa)) folds into the MTTase N-terminal domain. Residues cysteine 17, cysteine 53, cysteine 82, cysteine 149, cysteine 153, and cysteine 156 each contribute to the [4Fe-4S] cluster site. Positions 135–372 (LTPDHFAYLK…MQVQEDISAD (238 aa)) constitute a Radical SAM core domain. In terms of domain architecture, TRAM spans 375 to 440 (AAKIDTVIQV…DHHDLYAQVV (66 aa)).

It belongs to the methylthiotransferase family. RimO subfamily. [4Fe-4S] cluster serves as cofactor.

The protein resides in the cytoplasm. The enzyme catalyses L-aspartate(89)-[ribosomal protein uS12]-hydrogen + (sulfur carrier)-SH + AH2 + 2 S-adenosyl-L-methionine = 3-methylsulfanyl-L-aspartate(89)-[ribosomal protein uS12]-hydrogen + (sulfur carrier)-H + 5'-deoxyadenosine + L-methionine + A + S-adenosyl-L-homocysteine + 2 H(+). In terms of biological role, catalyzes the methylthiolation of an aspartic acid residue of ribosomal protein uS12. This Dechloromonas aromatica (strain RCB) protein is Ribosomal protein uS12 methylthiotransferase RimO.